The primary structure comprises 72 residues: ATP synthase protein 8 (72 aa).

Residues 16–36 (WTLIALFLLFSFLVVSVLPAV) form a helical membrane-spanning segment.

It belongs to the ATPase protein 8 family. F-type ATPases have 2 components, CF(1) - the catalytic core - and CF(0) - the membrane proton channel.

The protein localises to the mitochondrion membrane. Its function is as follows. Mitochondrial membrane ATP synthase (F(1)F(0) ATP synthase or Complex V) produces ATP from ADP in the presence of a proton gradient across the membrane which is generated by electron transport complexes of the respiratory chain. F-type ATPases consist of two structural domains, F(1) - containing the extramembraneous catalytic core and F(0) - containing the membrane proton channel, linked together by a central stalk and a peripheral stalk. During catalysis, ATP synthesis in the catalytic domain of F(1) is coupled via a rotary mechanism of the central stalk subunits to proton translocation. Part of the complex F(0) domain. Minor subunit located with subunit a in the membrane. This chain is ATP synthase protein 8 (MTATP8), found in Metridium senile (Brown sea anemone).